A 422-amino-acid polypeptide reads, in one-letter code: MDKLLINGGKALHGEVVISGAKNAALPIMAASLLASDHVTISNVPHLKDITTMMELLGQLGAHLIVDEKMNVQVDSSQVNEFVAPYDLVKTMRASILVLGPMLARFGKADVSLPGGCAIGTRPVDLHLKALRAMGADITVKNGYINARCKKGRLQGKRLMFDTVTVTGTENVLMAAVLAEGITTIKNAAREPEVVDLANFLIQMGAKIRGAGTSTIEVEGVESLNGGTYSVMSDRIEAGTYLAAGALTRGQVTVKKVRPDTLLSQLCKFEEAGAELTIGEDWVSLNMHNKRPQAVNIATAPYPAFATDMQAQFMAMNSVAEGSSTIIETIFENRFMHVQELQRMGANIQLNGNTAIVHGVEKLTGAPVMATDLRASASLILAGLVAEGETVVERIYHVDRGYERIEEKLSLLGADIKRVSDR.

22-23 (KN) provides a ligand contact to phosphoenolpyruvate. Arg-93 serves as a coordination point for UDP-N-acetyl-alpha-D-glucosamine. Cys-117 serves as the catalytic Proton donor. Position 117 is a 2-(S-cysteinyl)pyruvic acid O-phosphothioketal (Cys-117). UDP-N-acetyl-alpha-D-glucosamine-binding positions include 122-126 (RPVDL), Asp-308, and Ile-330.

This sequence belongs to the EPSP synthase family. MurA subfamily.

The protein resides in the cytoplasm. The catalysed reaction is phosphoenolpyruvate + UDP-N-acetyl-alpha-D-glucosamine = UDP-N-acetyl-3-O-(1-carboxyvinyl)-alpha-D-glucosamine + phosphate. Its pathway is cell wall biogenesis; peptidoglycan biosynthesis. Cell wall formation. Adds enolpyruvyl to UDP-N-acetylglucosamine. In Legionella pneumophila (strain Lens), this protein is UDP-N-acetylglucosamine 1-carboxyvinyltransferase 2.